Consider the following 433-residue polypeptide: MNSEPKPGLAMSSHFMGTDNQDQYKGTYAMNRLSIANLLNSPSSTLPTGNDFQNFGLERQINEGVLPQLLQNPWAINFWLQFQNAQLQPHLQYAALACSLVTENPLDLSNKTMNMLQKIGVFNSVTKSEDDESVAPEKPVDESLNKSNILRRNYTVEDLTQAVEDIRQGKLGTRRASVVYGIPRSTLRNKIYKLEAEGAIPSKVRRGKIAARRAEAEQKRCVEATAAAALLDAFGNQSDSSSSSPHASMCPSSPDSTNSSLEGTGETPEMSDKKSCSPLDPKWLESIWQNLFKTQGNVVPVDSANISNVDTHTPTPISEKSQKMHGNEEWKRSRPKRGQYRKYDKNALDEAVRSVRRGEMTVHRAGSFFGVPHSTLEYKVKERNLMRKKKDCLYSHDSSTSEDGSQLVTSTISEKSDSSSHTSTPIPFPISLV.

An HTH psq-type 1 domain is found at 145 to 197; sequence NKSNILRRNYTVEDLTQAVEDIRQGKLGTRRASVVYGIPRSTLRNKIYKLEAE. Positions 173–193 form a DNA-binding region, H-T-H motif; that stretch reads TRRASVVYGIPRSTLRNKIYK. Low complexity predominate over residues 235–254; it reads GNQSDSSSSSPHASMCPSSP. Disordered regions lie at residues 235–278 and 304–338; these read GNQS…SCSP and ANISNVDTHTPTPISEKSQKMHGNEEWKRSRPKRG. A compositionally biased stretch (polar residues) spans 304–319; the sequence is ANISNVDTHTPTPISE. A compositionally biased stretch (basic and acidic residues) spans 320-332; the sequence is KSQKMHGNEEWKR. Residues 334–386 form the HTH psq-type 2 domain; it reads RPKRGQYRKYDKNALDEAVRSVRRGEMTVHRAGSFFGVPHSTLEYKVKERNLM. The segment at residues 362–382 is a DNA-binding region (H-T-H motif); it reads VHRAGSFFGVPHSTLEYKVKE. The segment at 393-433 is disordered; it reads LYSHDSSTSEDGSQLVTSTISEKSDSSSHTSTPIPFPISLV. Residues 396-408 are compositionally biased toward polar residues; it reads HDSSTSEDGSQLV. A compositionally biased stretch (low complexity) spans 409 to 424; that stretch reads TSTISEKSDSSSHTST.

Expressed in AIM, RIC, AIZ, ADF, ADL, ASK, AWA, AUA, AIN, RIH (or RIR) and RIF head neurons and, in PVP, PVQ and DVA (or DVC) tail neurons, some intestinal cells, somatic gonad and vulva.

It is found in the nucleus. In terms of biological role, may act as transcription activator. Plays a role in neurogenesis by regulating neurite pruning between left and right AIM neurons and left and right RIF neurons during larval development. Regulates olfactory plasticity. This chain is Mblk-1-related factor 1, found in Caenorhabditis elegans.